An 826-amino-acid polypeptide reads, in one-letter code: Ribonucleoside-diphosphate reductase large subunit (826 aa).

Substrate is bound by residues T171, 186–187, G217, 387–391, and 594–598; these read SC, NLCAE, and PTSGC. The cysteines at positions 187 and 403 are disulfide-linked. N387 functions as the Proton acceptor in the catalytic mechanism. C389 functions as the Cysteine radical intermediate in the catalytic mechanism. E391 (proton acceptor) is an active-site residue.

This sequence belongs to the ribonucleoside diphosphate reductase large chain family. As to quaternary structure, heterotetramer composed of a homodimer of the large subunit (R1) and a homodimer of the small subunit (R2). Larger multisubunit protein complex are also active, composed of (R1)n(R2)n.

The catalysed reaction is a 2'-deoxyribonucleoside 5'-diphosphate + [thioredoxin]-disulfide + H2O = a ribonucleoside 5'-diphosphate + [thioredoxin]-dithiol. Its function is as follows. Ribonucleoside-diphosphate reductase holoenzyme provides the precursors necessary for viral DNA synthesis. Allows virus growth in non-dividing cells, as well as reactivation from latency in infected hosts. Catalyzes the biosynthesis of deoxyribonucleotides from the corresponding ribonucleotides. The chain is Ribonucleoside-diphosphate reductase large subunit from Epstein-Barr virus (strain GD1) (HHV-4).